The following is a 198-amino-acid chain: V-type ATP synthase subunit E (198 aa).

It belongs to the V-ATPase E subunit family.

In terms of biological role, produces ATP from ADP in the presence of a proton gradient across the membrane. In Acetivibrio thermocellus (strain ATCC 27405 / DSM 1237 / JCM 9322 / NBRC 103400 / NCIMB 10682 / NRRL B-4536 / VPI 7372) (Clostridium thermocellum), this protein is V-type ATP synthase subunit E.